A 354-amino-acid chain; its full sequence is Petrobactin import system permease protein FatC (354 aa).

A run of 9 helical transmembrane segments spans residues 37–57, 77–97, 116–136, 141–161, 168–188, 214–234, 259–279, 302–322, and 329–349; these read YWIV…GLLV, IVAI…TVAF, LYSA…LINF, SFLF…GWLL, LQLM…VSTF, PAYF…IFAH, VIYT…LIGP, YIFP…YFLM, and QGVV…TIVL.

It belongs to the binding-protein-dependent transport system permease family. FecCD subfamily. The complex is composed of two ATP-binding proteins (FatE), two transmembrane proteins (FatC and FatD) and a solute-binding protein (FpuA).

Its subcellular location is the cell membrane. In terms of biological role, part of an ABC transporter complex involved in ferric-petrobactin uptake. Probably responsible for the translocation of the substrate across the membrane. In Bacillus anthracis, this protein is Petrobactin import system permease protein FatC.